The chain runs to 293 residues: ADP-forming sulfoacetate-CoA ligase subunit SauD (293 aa).

Residues 17 to 20 (TGKE), K43, and 96 to 98 (IAD) contribute to the CoA site. H251 serves as the catalytic Tele-phosphohistidine intermediate.

This sequence belongs to the succinate/malate CoA ligase alpha subunit family. As to quaternary structure, forms a complex with SauC.

The catalysed reaction is sulfoacetate + ATP + CoA = sulfoacetyl-CoA + ADP + phosphate. Its function is as follows. Involved in the degradation of sulfoacetate. Catalyzes the CoA- and ATP-dependent conversion of sulfoacetate to sulfoacetyl-CoA and ADP. Cannot use other sulfonic and carboxylic acids, and shows only residual activity with 3-sulfopropanoate and malonic acid. The sequence is that of ADP-forming sulfoacetate-CoA ligase subunit SauD from Bilophila wadsworthia (strain 3_1_6).